The sequence spans 335 residues: Anthranilate phosphoribosyltransferase (335 aa).

Residues glycine 79, 82 to 83 (GD), threonine 87, 89 to 92 (NVST), 107 to 115 (KHGSRSVSS), and serine 119 contribute to the 5-phospho-alpha-D-ribose 1-diphosphate site. Residue glycine 79 coordinates anthranilate. Serine 91 is a binding site for Mg(2+). Arginine 165 is an anthranilate binding site. Mg(2+) is bound by residues aspartate 223 and glutamate 224.

It belongs to the anthranilate phosphoribosyltransferase family. In terms of assembly, homodimer. Mg(2+) serves as cofactor.

The enzyme catalyses N-(5-phospho-beta-D-ribosyl)anthranilate + diphosphate = 5-phospho-alpha-D-ribose 1-diphosphate + anthranilate. Its pathway is amino-acid biosynthesis; L-tryptophan biosynthesis; L-tryptophan from chorismate: step 2/5. Its function is as follows. Catalyzes the transfer of the phosphoribosyl group of 5-phosphorylribose-1-pyrophosphate (PRPP) to anthranilate to yield N-(5'-phosphoribosyl)-anthranilate (PRA). This is Anthranilate phosphoribosyltransferase from Helicobacter pylori (strain HPAG1).